An 856-amino-acid polypeptide reads, in one-letter code: Valine--tRNA ligase (856 aa).

The short motif at 47–57 (PTASGVLHIGH) is the 'HIGH' region element. The 'KMSKS' region signature appears at 578 to 582 (KMSKS). Lysine 581 contacts ATP.

It belongs to the class-I aminoacyl-tRNA synthetase family. ValS type 2 subfamily. In terms of assembly, monomer.

Its subcellular location is the cytoplasm. The catalysed reaction is tRNA(Val) + L-valine + ATP = L-valyl-tRNA(Val) + AMP + diphosphate. Functionally, catalyzes the attachment of valine to tRNA(Val). As ValRS can inadvertently accommodate and process structurally similar amino acids such as threonine, to avoid such errors, it has a 'posttransfer' editing activity that hydrolyzes mischarged Thr-tRNA(Val) in a tRNA-dependent manner. The chain is Valine--tRNA ligase from Tropheryma whipplei (strain TW08/27) (Whipple's bacillus).